We begin with the raw amino-acid sequence, 190 residues long: dTTP/UTP pyrophosphatase (190 aa).

D67 (proton acceptor) is an active-site residue.

This sequence belongs to the Maf family. YhdE subfamily. A divalent metal cation serves as cofactor.

The protein localises to the cytoplasm. The enzyme catalyses dTTP + H2O = dTMP + diphosphate + H(+). It catalyses the reaction UTP + H2O = UMP + diphosphate + H(+). Its function is as follows. Nucleoside triphosphate pyrophosphatase that hydrolyzes dTTP and UTP. May have a dual role in cell division arrest and in preventing the incorporation of modified nucleotides into cellular nucleic acids. In Aquifex aeolicus (strain VF5), this protein is dTTP/UTP pyrophosphatase.